The chain runs to 210 residues: Putative transmembrane protein DDB_G0267530 (210 aa).

Residues 1 to 40 (MGVEDQPQTQPQTQPQQQPQMGYQPQMGYQPQAQMGYQPQ) form a disordered region. 2 helical membrane passes run 119–139 (VIVFIIGFFFSIVWLGGFFFI) and 148–168 (TFGILSVVFFFLVLVIVVIVV).

Its subcellular location is the membrane. The sequence is that of Putative transmembrane protein DDB_G0267530 from Dictyostelium discoideum (Social amoeba).